Here is a 351-residue protein sequence, read N- to C-terminus: MAAAAPATAAVRRMKLGSQGLEVSAQGLGCMGMSAFYGPPKPEPDMVALIHHAVAAGVTLLDTSDIYGPHTNELLLGKALQGGVRDKVELATKFGIAFEDGKRDVRGDPAYVRAACEGSLRRLGVDSIDLYYQHRVDKKVPIEVTIGELKKLVEEGKIKYIGLSEASASTIRRAHAVHPITAVQLEWSLWSRDVEEDIIPTCRELGIGIVAYSPLGRGFFSAGAKLVESLSDQDFRKHIPRFQQENLEKNAEIFERVNAMAARKGCTPSQLALAWVHHQGSDVCPIPGTTKIENLNQNIGALSVKLTPEEMAELESYASTDDVRGDRYPQAMANTTWQNSETPPLSSWKAQ.

Residue tyrosine 67 is the Proton donor of the active site. Histidine 134 contributes to the substrate binding site. An NADP(+)-binding site is contributed by 213–223 (SPLGRGFFSAG). The segment at 317–351 (YASTDDVRGDRYPQAMANTTWQNSETPPLSSWKAQ) is disordered. The span at 332–351 (MANTTWQNSETPPLSSWKAQ) shows a compositional bias: polar residues.

This sequence belongs to the aldo/keto reductase family.

This is Probable aldo-keto reductase 2 from Oryza sativa subsp. japonica (Rice).